Consider the following 98-residue polypeptide: Beta-elicitin cinnamomin (98 aa).

3 disulfide bridges follow: Cys3–Cys71, Cys27–Cys56, and Cys51–Cys95. The short motif at 33–42 is the Beak-like motif 1 (ligand binding) element; sequence YSMLTATALP. Residues 72-83 carry the Beak-like motif 2 (ligand binding) motif; it reads DLTVPTSGLVLD.

This sequence belongs to the elicitin family.

It localises to the secreted. Functionally, induces local and distal defense responses (incompatible hypersensitive reaction) in plants from the solanaceae and cruciferae families. Elicits leaf necrosis and causes the accumulation of pathogenesis-related proteins. Might interact with the lipidic molecules of the plasma membrane. Elicitins are able to load, carry, and transfer sterols between membranes. The polypeptide is Beta-elicitin cinnamomin (Phytophthora cinnamomi (Cinnamon fungus)).